A 209-amino-acid chain; its full sequence is Urease accessory protein UreG (209 aa).

16–23 (GPVGSGKT) serves as a coordination point for GTP.

It belongs to the SIMIBI class G3E GTPase family. UreG subfamily. As to quaternary structure, homodimer. UreD, UreF and UreG form a complex that acts as a GTP-hydrolysis-dependent molecular chaperone, activating the urease apoprotein by helping to assemble the nickel containing metallocenter of UreC. The UreE protein probably delivers the nickel.

The protein resides in the cytoplasm. Facilitates the functional incorporation of the urease nickel metallocenter. This process requires GTP hydrolysis, probably effectuated by UreG. The polypeptide is Urease accessory protein UreG (Blochmanniella floridana).